The following is a 201-amino-acid chain: ATP-dependent Clp protease proteolytic subunit 2 (201 aa).

Ser98 functions as the Nucleophile in the catalytic mechanism. His123 is an active-site residue.

This sequence belongs to the peptidase S14 family. Fourteen ClpP subunits assemble into 2 heptameric rings which stack back to back to give a disk-like structure with a central cavity, resembling the structure of eukaryotic proteasomes.

The protein resides in the cytoplasm. The catalysed reaction is Hydrolysis of proteins to small peptides in the presence of ATP and magnesium. alpha-casein is the usual test substrate. In the absence of ATP, only oligopeptides shorter than five residues are hydrolyzed (such as succinyl-Leu-Tyr-|-NHMec, and Leu-Tyr-Leu-|-Tyr-Trp, in which cleavage of the -Tyr-|-Leu- and -Tyr-|-Trp bonds also occurs).. In terms of biological role, cleaves peptides in various proteins in a process that requires ATP hydrolysis. Has a chymotrypsin-like activity. Plays a major role in the degradation of misfolded proteins. In Pseudomonas aeruginosa (strain ATCC 15692 / DSM 22644 / CIP 104116 / JCM 14847 / LMG 12228 / 1C / PRS 101 / PAO1), this protein is ATP-dependent Clp protease proteolytic subunit 2.